Reading from the N-terminus, the 101-residue chain is Cilia- and flagella-associated protein 141 (101 aa).

As to quaternary structure, microtubule inner protein component of sperm flagellar doublet microtubules. In terms of tissue distribution, expressed in airway epithelial cells.

The protein localises to the cytoplasm. It localises to the cytoskeleton. Its subcellular location is the cilium axoneme. It is found in the flagellum axoneme. Functionally, microtubule inner protein (MIP) part of the dynein-decorated doublet microtubules (DMTs) in cilia axoneme, which is required for motile cilia beating. In Homo sapiens (Human), this protein is Cilia- and flagella-associated protein 141.